Consider the following 287-residue polypeptide: ATP synthase gamma chain (287 aa).

The protein belongs to the ATPase gamma chain family. F-type ATPases have 2 components, CF(1) - the catalytic core - and CF(0) - the membrane proton channel. CF(1) has five subunits: alpha(3), beta(3), gamma(1), delta(1), epsilon(1). CF(0) has three main subunits: a, b and c.

The protein localises to the cell membrane. Produces ATP from ADP in the presence of a proton gradient across the membrane. The gamma chain is believed to be important in regulating ATPase activity and the flow of protons through the CF(0) complex. The polypeptide is ATP synthase gamma chain (Staphylococcus carnosus (strain TM300)).